A 139-amino-acid chain; its full sequence is Endoribonuclease YbeY (139 aa).

His110, His114, and His120 together coordinate Zn(2+).

The protein belongs to the endoribonuclease YbeY family. It depends on Zn(2+) as a cofactor.

The protein resides in the cytoplasm. Single strand-specific metallo-endoribonuclease involved in late-stage 70S ribosome quality control and in maturation of the 3' terminus of the 16S rRNA. This is Endoribonuclease YbeY from Thermus thermophilus (strain ATCC BAA-163 / DSM 7039 / HB27).